Consider the following 197-residue polypeptide: Peptide deformylase (197 aa).

The Fe cation site is built by Cys-106 and His-148. The active site involves Glu-149. Residue His-152 coordinates Fe cation.

This sequence belongs to the polypeptide deformylase family. Fe(2+) is required as a cofactor.

The enzyme catalyses N-terminal N-formyl-L-methionyl-[peptide] + H2O = N-terminal L-methionyl-[peptide] + formate. Its function is as follows. Removes the formyl group from the N-terminal Met of newly synthesized proteins. Requires at least a dipeptide for an efficient rate of reaction. N-terminal L-methionine is a prerequisite for activity but the enzyme has broad specificity at other positions. This Mycobacteroides abscessus (strain ATCC 19977 / DSM 44196 / CCUG 20993 / CIP 104536 / JCM 13569 / NCTC 13031 / TMC 1543 / L948) (Mycobacterium abscessus) protein is Peptide deformylase.